Reading from the N-terminus, the 141-residue chain is MLTEDDKQLIQHVWEKVLEHQEDFGAEALERMFIVYPSTKTYFPHFDLHHDSEQIRHHGKKVVGALGDAVKHIDNLSATLSELSNLHAYNLRVDPVNFKLLSHCFQVVLGAHLGREYTPQVQVAYDKFLAAVSAVLAEKYR.

One can recognise a Globin domain in the interval 1-141 (MLTEDDKQLI…VSAVLAEKYR (141 aa)). H58 is a binding site for O2. A heme b-binding site is contributed by H87.

It belongs to the globin family. In terms of assembly, tetramer of two alpha chains and two beta chains. Red blood cells.

In terms of biological role, involved in oxygen transport from the lung to the various peripheral tissues. The polypeptide is Hemoglobin D subunit alpha (Aldabrachelys gigantea (Aldabra giant tortoise)).